Consider the following 241-residue polypeptide: METESADIPPNQTLYVNNLYEKISKKKLIEQLLLLFSKYGPILEIVGSKSLKMRGQAFIVFKDITSASNALREMNGFNFLDRPMKIQYCKSKSDAVSKLDGTYMEKKREREENDKKGSNKKQDRKSTGQQQQQQKRPGAPTSTTSTTSPTTSNGTVSLQPRDDPPNKTLFVENLPDKCDSMMLSMLFSQFQGFKEVHMVESKKGIAFIEFEDEIKSGFAMTNLQHFKVTPEKPMVVSFAAQ.

Residues 12–91 form the RRM 1 domain; it reads QTLYVNNLYE…RPMKIQYCKS (80 aa). Residues 99 to 126 show a composition bias toward basic and acidic residues; the sequence is LDGTYMEKKREREENDKKGSNKKQDRKS. The disordered stretch occupies residues 99 to 169; that stretch reads LDGTYMEKKR…PRDDPPNKTL (71 aa). Residues 129 to 152 are compositionally biased toward low complexity; it reads QQQQQQKRPGAPTSTTSTTSPTTS. Residues 167–241 enclose the RRM 2 domain; the sequence is KTLFVENLPD…KPMVVSFAAQ (75 aa).

Belongs to the RRM U1 A/B'' family. In terms of assembly, identified in the spliceosome B complex. Identified in the spliceosome C complex.

The protein localises to the nucleus. Involved in pre-mRNA splicing as component of the spliceosome. Associated with sn-RNP U2, where it contributes to the binding of stem loop IV of U2 snRNA. This chain is U2 small nuclear ribonucleoprotein B'' (snrpb2), found in Dictyostelium discoideum (Social amoeba).